The chain runs to 320 residues: Zona pellucida-binding protein 1 (320 aa).

N85 and N158 each carry an N-linked (GlcNAc...) asparagine glycan.

The protein belongs to the zona pellucida-binding protein Sp38 family.

Its subcellular location is the cytoplasmic vesicle. The protein localises to the secretory vesicle. It is found in the acrosome. It localises to the secreted. The protein resides in the acrosome membrane. In terms of biological role, plays a role in sperm morphogenesis and in sperm-oocyte interaction during fertilization. This chain is Zona pellucida-binding protein 1 (ZPBP1), found in Gallus gallus (Chicken).